The sequence spans 444 residues: MPIENYFGKKALIIGLGVSGRAAASFLQTSGVKVLGVDRDYLQLENQPEILELKAKGLVIQADCETIDLKTFDLIVVSPGIPSNHPLIKKAHEHKKEVIGEIELGCRASCHSIIGVTGTNGKTTVTLLITHILNANGLKAKALGNVGTPLTREILTLDFQEIAVLELSSYQLDTFQQQVLDEAVVLNITPDHLERYETMENYAKSKFQIGKCLKKSGKLFVERKAAVEYQHLLNFPHSTYGYLPSCHTYTDLCSVFLEGMQQFELPLEWQGKENHDLENLLAAYAICARRGIKPQQFLQALKTFQKPSHRVEFVLEKNGIHFYDDSKGTNIDAVMRAVQSINRPVFLIAGGVDKGASYVAWLNVFKGHVKKVYAIGQAANKIQKELSLHIRVQIEANLDDAVKQAYQDAKEGDAVLLSPGCASFDMFKDYIHRGEEFKRLVKLL.

118–124 (GTNGKTT) contributes to the ATP binding site.

Belongs to the MurCDEF family.

It is found in the cytoplasm. The catalysed reaction is UDP-N-acetyl-alpha-D-muramoyl-L-alanine + D-glutamate + ATP = UDP-N-acetyl-alpha-D-muramoyl-L-alanyl-D-glutamate + ADP + phosphate + H(+). It participates in cell wall biogenesis; peptidoglycan biosynthesis. Cell wall formation. Catalyzes the addition of glutamate to the nucleotide precursor UDP-N-acetylmuramoyl-L-alanine (UMA). This is UDP-N-acetylmuramoylalanine--D-glutamate ligase from Protochlamydia amoebophila (strain UWE25).